A 289-amino-acid chain; its full sequence is Nucleotide-binding protein Franean1_2060 (289 aa).

13-20 contributes to the ATP binding site; the sequence is GLSGAGRS. 64-67 contacts GTP; sequence DVRG.

The protein belongs to the RapZ-like family.

Displays ATPase and GTPase activities. The polypeptide is Nucleotide-binding protein Franean1_2060 (Parafrankia sp. (strain EAN1pec)).